The sequence spans 470 residues: E3 ubiquitin-protein ligase TRAIP (470 aa).

An RING-type; atypical zinc finger spans residues 7–50; it reads CTICSDFFDHSRDVAAIHCGHTFHLQCLIQWFETAPSRTCPQCR. Residues 76 to 277 adopt a coiled-coil conformation; the sequence is AEFLKNELDS…RKKLMILQGT (202 aa). An interaction with CYLD region spans residues 211–470; that stretch reads LKEARKATGE…QPKLDTFLCQ (260 aa). Positions 461 to 470 match the PIP-box motif; it reads QPKLDTFLCQ.

The protein belongs to the TRAIP family. Interacts (via PIP-box) with PCNA. Binds TRAF1, TRAF2, TRAF3, TRAF5 and TRAF6 is part of the receptor-TRAF signaling complex. May interact with CYLD; the C-terminus interacts with CYLD, however the interaction was not detected with the full-length protein. Interacts with POLK and POLN. Interacts with UIMC1. Autoubiquitinated. Post-translationally, sumoylated; sumoylation is required for nuclear localization. Sumoylation increases protein stability, possibly by preventing ubiquitination. In terms of tissue distribution, detected in testis and thymus, and at lower levels in spleen.

It is found in the nucleus. The protein localises to the nucleoplasm. The protein resides in the nucleolus. It localises to the chromosome. Its subcellular location is the cytoplasm. It is found in the perinuclear region. It catalyses the reaction S-ubiquitinyl-[E2 ubiquitin-conjugating enzyme]-L-cysteine + [acceptor protein]-L-lysine = [E2 ubiquitin-conjugating enzyme]-L-cysteine + N(6)-ubiquitinyl-[acceptor protein]-L-lysine.. Its pathway is protein modification; protein ubiquitination. Functionally, E3 ubiquitin ligase required to protect genome stability in response to replication stress. Acts as a key regulator of interstrand cross-link repair, which takes place when both strands of duplex DNA are covalently tethered together, thereby blocking replication and transcription. During mitosis, controls the choice between the two pathways of replication-coupled interstrand-cross-link repair by mediating ubiquitination of MCM7 subunit of the CMG helicase complex. Short ubiquitin chains on MCM7 promote recruitment of DNA glycosylase NEIL3. If the interstrand cross-link cannot be cleaved by NEIL3, the ubiquitin chains continue to grow on MCM7, promoting the unloading of the CMG helicase complex by the VCP/p97 ATPase, enabling the Fanconi anemia DNA repair pathway. Only catalyzes ubiquitination of MCM7 when forks converge. Also involved in the repair of covalent DNA-protein cross-links (DPCs) during DNA synthesis: promotes ubiquitination of DPCs, leading to their degradation by the proteasome. Has also been proposed to play a role in promoting translesion synthesis by mediating the assembly of 'Lys-63'-linked poly-ubiquitin chains on the Y-family polymerase POLN in order to facilitate bypass of DNA lesions and preserve genomic integrity. The function in translesion synthesis is however controversial. Acts as a regulator of the spindle assembly checkpoint. Also acts as a negative regulator of innate immune signaling by inhibiting activation of NF-kappa-B mediated by TNF. Negatively regulates TLR3/4- and RIG-I-mediated IRF3 activation and subsequent IFNB1 production and cellular antiviral response by promoting 'Lys-48'-linked polyubiquitination of TNK1 leading to its proteasomal degradation. The chain is E3 ubiquitin-protein ligase TRAIP from Mus musculus (Mouse).